A 303-amino-acid polypeptide reads, in one-letter code: Recombination-associated protein RdgC (303 aa).

The protein belongs to the RdgC family.

It is found in the cytoplasm. The protein resides in the nucleoid. Functionally, may be involved in recombination. This Pseudoalteromonas translucida (strain TAC 125) protein is Recombination-associated protein RdgC.